The following is a 510-amino-acid chain: GMP synthase [glutamine-hydrolyzing] (510 aa).

Residues leucine 5–aspartate 195 enclose the Glutamine amidotransferase type-1 domain. Cysteine 82 serves as the catalytic Nucleophile. Active-site residues include histidine 169 and glutamate 171. In terms of domain architecture, GMPS ATP-PPase spans tryptophan 196–arginine 385. Serine 223–serine 229 provides a ligand contact to ATP.

In terms of assembly, homodimer.

The enzyme catalyses XMP + L-glutamine + ATP + H2O = GMP + L-glutamate + AMP + diphosphate + 2 H(+). The protein operates within purine metabolism; GMP biosynthesis; GMP from XMP (L-Gln route): step 1/1. Its function is as follows. Catalyzes the synthesis of GMP from XMP. The polypeptide is GMP synthase [glutamine-hydrolyzing] (Alkaliphilus metalliredigens (strain QYMF)).